The following is a 250-amino-acid chain: Flavin-dependent thymidylate synthase (250 aa).

Positions 7 to 233 constitute a ThyX domain; that stretch reads LRVQLIAKTE…PQVFSDFEIV (227 aa). Residues S71, 95 to 97, and Q103 each bind FAD; that span reads RHR. DUMP-binding positions include 92 to 95, 103 to 107, and R172; these read ELIR and QLSQR. Positions 95-105 match the ThyX motif motif; the sequence is RHRHFSYSQLS. FAD contacts are provided by residues 188-190 and H194; that span reads NYR. Residue R199 participates in dUMP binding. R199 (involved in ionization of N3 of dUMP, leading to its activation) is an active-site residue.

The protein belongs to the thymidylate synthase ThyX family. Homotetramer. The cofactor is FAD.

The catalysed reaction is dUMP + (6R)-5,10-methylene-5,6,7,8-tetrahydrofolate + NADPH + H(+) = dTMP + (6S)-5,6,7,8-tetrahydrofolate + NADP(+). Its pathway is pyrimidine metabolism; dTTP biosynthesis. Catalyzes the reductive methylation of 2'-deoxyuridine-5'-monophosphate (dUMP) to 2'-deoxythymidine-5'-monophosphate (dTMP) while utilizing 5,10-methylenetetrahydrofolate (mTHF) as the methyl donor, and NADPH and FADH(2) as the reductant. The protein is Flavin-dependent thymidylate synthase of Mycolicibacterium vanbaalenii (strain DSM 7251 / JCM 13017 / BCRC 16820 / KCTC 9966 / NRRL B-24157 / PYR-1) (Mycobacterium vanbaalenii).